Reading from the N-terminus, the 305-residue chain is Ribonucleoside-diphosphate reductase small subunit (305 aa).

Fe cation-binding residues include E64, E94, and H97. The active site involves Y101. A helical transmembrane segment spans residues V150–T170. Fe cation-binding residues include E157, E191, and H194.

Belongs to the ribonucleoside diphosphate reductase small chain family. As to quaternary structure, heterotetramer composed of a homodimer of the large subunit (R1) and a homodimer of the small subunit (R2). Larger multisubunit protein complex are also active, composed of (R1)n(R2)n. Requires Fe cation as cofactor.

The protein localises to the host membrane. The enzyme catalyses a 2'-deoxyribonucleoside 5'-diphosphate + [thioredoxin]-disulfide + H2O = a ribonucleoside 5'-diphosphate + [thioredoxin]-dithiol. Functionally, ribonucleoside-diphosphate reductase holoenzyme provides the precursors necessary for viral DNA synthesis. Allows virus growth in non-dividing cells, as well as reactivation from latency in infected hosts. Catalyzes the biosynthesis of deoxyribonucleotides from the corresponding ribonucleotides. The polypeptide is Ribonucleoside-diphosphate reductase small subunit (Equus caballus (Horse)).